Here is a 456-residue protein sequence, read N- to C-terminus: Chromosomal replication initiator protein DnaA (456 aa).

Residues 1-73 (MEIYLDNLWD…ADVVHDILGY (73 aa)) form a domain I, interacts with DnaA modulators region. A domain II region spans residues 73–117 (YPVEIYLTTFLVEDSRKNDSGLIWSEHKSVNILGENLSIPKPLPA). The segment at 118 to 334 (NLNAKYMFSR…GALTRVVTYI (217 aa)) is domain III, AAA+ region. The ATP site is built by Gly-162, Gly-164, Lys-165, and Thr-166. A domain IV, binds dsDNA region spans residues 335–456 (SISGLPMTVE…SDRINFSSRH (122 aa)).

This sequence belongs to the DnaA family. In terms of assembly, oligomerizes as a right-handed, spiral filament on DNA at oriC.

It is found in the cytoplasm. In terms of biological role, plays an essential role in the initiation and regulation of chromosomal replication. ATP-DnaA binds to the origin of replication (oriC) to initiate formation of the DNA replication initiation complex once per cell cycle. Binds the DnaA box (a 9 base pair repeat at the origin) and separates the double-stranded (ds)DNA. Forms a right-handed helical filament on oriC DNA; dsDNA binds to the exterior of the filament while single-stranded (ss)DNA is stabiized in the filament's interior. The ATP-DnaA-oriC complex binds and stabilizes one strand of the AT-rich DNA unwinding element (DUE), permitting loading of DNA polymerase. After initiation quickly degrades to an ADP-DnaA complex that is not apt for DNA replication. Binds acidic phospholipids. The polypeptide is Chromosomal replication initiator protein DnaA (Trichodesmium erythraeum (strain IMS101)).